The sequence spans 331 residues: Tetraacyldisaccharide 4'-kinase (331 aa).

60 to 67 (TIGGTGKT) serves as a coordination point for ATP.

This sequence belongs to the LpxK family.

The catalysed reaction is a lipid A disaccharide + ATP = a lipid IVA + ADP + H(+). It participates in glycolipid biosynthesis; lipid IV(A) biosynthesis; lipid IV(A) from (3R)-3-hydroxytetradecanoyl-[acyl-carrier-protein] and UDP-N-acetyl-alpha-D-glucosamine: step 6/6. Its function is as follows. Transfers the gamma-phosphate of ATP to the 4'-position of a tetraacyldisaccharide 1-phosphate intermediate (termed DS-1-P) to form tetraacyldisaccharide 1,4'-bis-phosphate (lipid IVA). The protein is Tetraacyldisaccharide 4'-kinase of Pseudomonas syringae pv. tomato (strain ATCC BAA-871 / DC3000).